Here is a 252-residue protein sequence, read N- to C-terminus: ATP-dependent L-serine kinase (252 aa).

Residue E35 is part of the active site. V73 is a binding site for O-phospho-L-serine. D74 contributes to the Mg(2+) binding site. Residues G75, H76, H77, W107, K231, T233, and H235 each coordinate O-phospho-L-serine.

Belongs to the SerK family. As to quaternary structure, monomer. Mg(2+) is required as a cofactor.

It carries out the reaction L-serine + ATP = O-phospho-L-serine + ADP + H(+). Its function is as follows. Free serine kinase that uses ATP to phosphorylate L-serine to yield O-phospho-L-serine and ADP. Can use ATP, UTP, CTP, GTP and the inorganic polyphosphates triphosphate and tetraphosphate as phosphate donors, with a preference for nucleoside 5'-triphosphates, but cannot use ADP. The catalytic efficiency is highest for ATP. Is specific for L-serine and cannot phosphorylate structurally similar compounds such as D-serine, L-threonine, L-homoserine, hydroxypyruvate, 3-hydroxypropionate and DL-glycerate. Likely contributes to serine metabolism, including cysteine biosynthesis. The chain is ATP-dependent L-serine kinase from Staphylothermus marinus (strain ATCC 43588 / DSM 3639 / JCM 9404 / F1).